The primary structure comprises 1486 residues: Chromosome partition protein MukB (1486 aa).

34–41 provides a ligand contact to ATP; it reads GGNGAGKS. 3 coiled-coil regions span residues 326-418, 444-480, and 509-603; these read LEAD…QYNQ, LETF…QAYQ, and RHLA…RAPV. Residues 666–783 are flexible hinge; that stretch reads PGGSEDQRLN…EVPLFGRAAR (118 aa). Coiled-coil stretches lie at residues 835-923, 977-1115, and 1209-1266; these read EAEI…AKLE, EMLS…TAKA, and VEAI…QNVS.

The protein belongs to the SMC family. MukB subfamily. In terms of assembly, homodimerization via its hinge domain. Binds to DNA via its C-terminal region. Interacts, and probably forms a ternary complex, with MukE and MukF via its C-terminal region. The complex formation is stimulated by calcium or magnesium. Interacts with tubulin-related protein FtsZ.

It is found in the cytoplasm. It localises to the nucleoid. Plays a central role in chromosome condensation, segregation and cell cycle progression. Functions as a homodimer, which is essential for chromosome partition. Involved in negative DNA supercoiling in vivo, and by this means organize and compact chromosomes. May achieve or facilitate chromosome segregation by condensation DNA from both sides of a centrally located replisome during cell division. The protein is Chromosome partition protein MukB of Shigella boydii serotype 18 (strain CDC 3083-94 / BS512).